A 326-amino-acid chain; its full sequence is Olfactory receptor 11H12 (326 aa).

At 1-44 (MCPLTLQVTGLMNVSEPNSSFAFVNEFILQGFTCEWTIQIFLFS) the chain is on the extracellular side. 2 N-linked (GlcNAc...) asparagine glycosylation sites follow: asparagine 13 and asparagine 18. Residues 45–65 (LFTTTYALTITGNGAIAFVLW) form a helical membrane-spanning segment. The Cytoplasmic portion of the chain corresponds to 66-72 (CDWRLHT). A helical membrane pass occupies residues 73–93 (PMYMFLGNFSFLEIWYVSSTV). Residues 94-112 (PKMLVNFLSEKKNISFAGC) are Extracellular-facing. Residue asparagine 106 is glycosylated (N-linked (GlcNAc...) asparagine). A disulfide bridge links cysteine 112 with cysteine 194. Residues 113-133 (FLQFYFFFSLGTSECLLLTVM) traverse the membrane as a helical segment. Over 134 to 158 (AFDQYLAICRPLLYPNIMTGHLCAK) the chain is Cytoplasmic. The chain crosses the membrane as a helical span at residues 159 to 179 (LVILCWVCGFLWFLIPIVLIS). The Extracellular portion of the chain corresponds to 180–216 (QMPFCGPNIIDHVVCDPGPRFALDCVSAPRIQLFCYT). A helical membrane pass occupies residues 217–237 (LSSLVIFGNFLFIIGSYTLVL). Residues 238–259 (KAVLGMPSSTGRHKAFSTCGSH) are Cytoplasmic-facing. Residues 260-280 (LAVVSLCYSSLMVMYVSPGLG) form a helical membrane-spanning segment. Residues 281–287 (HSTGMQK) are Extracellular-facing. A helical membrane pass occupies residues 288-308 (IETLFYAMVTPLFNPLIYSLQ). At 309–326 (NKEIKAALRKVLGSSNII) the chain is on the cytoplasmic side.

This sequence belongs to the G-protein coupled receptor 1 family.

The protein localises to the cell membrane. In terms of biological role, odorant receptor. This chain is Olfactory receptor 11H12 (OR11H12), found in Homo sapiens (Human).